We begin with the raw amino-acid sequence, 245 residues long: Thiopurine S-methyltransferase (245 aa).

Ser-14 is modified (phosphoserine). 29–40 (WQDKWVNGKTAF) contributes to the S-adenosyl-L-methionine binding site. Phe-40 is a substrate binding site. At Lys-58 the chain carries N6-acetyllysine. Residues Leu-69, Glu-90, 134–135 (SI), and Arg-152 each bind S-adenosyl-L-methionine.

This sequence belongs to the class I-like SAM-binding methyltransferase superfamily. TPMT family. Monomer.

It localises to the cytoplasm. It catalyses the reaction S-adenosyl-L-methionine + a thiopurine = S-adenosyl-L-homocysteine + a thiopurine S-methylether.. The polypeptide is Thiopurine S-methyltransferase (TPMT) (Chlorocebus aethiops (Green monkey)).